A 101-amino-acid polypeptide reads, in one-letter code: Urease subunit beta (101 aa).

Belongs to the urease beta subunit family. In terms of assembly, heterotrimer of UreA (gamma), UreB (beta) and UreC (alpha) subunits. Three heterotrimers associate to form the active enzyme.

Its subcellular location is the cytoplasm. The enzyme catalyses urea + 2 H2O + H(+) = hydrogencarbonate + 2 NH4(+). It functions in the pathway nitrogen metabolism; urea degradation; CO(2) and NH(3) from urea (urease route): step 1/1. The chain is Urease subunit beta from Burkholderia ambifaria (strain MC40-6).